The primary structure comprises 373 residues: Gametogenetin-binding protein 1 (373 aa).

2 disordered regions span residues 26–113 (VGSK…GSQT) and 237–268 (KAQR…AVDE). Residues 36–49 (NRPLNRSQPSSSPE) show a composition bias toward polar residues. The required for induction of mitochondrial fragmentation stretch occupies residues 226–373 (LYKQLQKSAM…DEMGNWPPPE (148 aa)). Positions 254 to 263 (SPTEERGERE) are enriched in basic and acidic residues. Residues 301–373 (KTFRSTDTVG…DEMGNWPPPE (73 aa)) are interaction with GGN.

As to quaternary structure, interacts with CCDC159. Interacts with GGN.

It is found in the cytoplasm. The protein localises to the membrane. The protein resides in the golgi apparatus. Its subcellular location is the mitochondrion intermembrane space. Functionally, induces mitochondrial fragmentation, possibly by promoting DNM1L-dependent fission and may play a role in mitochondrial morphogenesis during spermatogenesis. This chain is Gametogenetin-binding protein 1 (Ggnbp1), found in Rattus norvegicus (Rat).